The sequence spans 137 residues: Small ribosomal subunit protein uS11 (137 aa).

The segment at 116 to 137 (EDVTPIPHDGTRPKGGRRGRRV) is disordered.

It belongs to the universal ribosomal protein uS11 family. Part of the 30S ribosomal subunit.

Its function is as follows. Located on the platform of the 30S subunit. The chain is Small ribosomal subunit protein uS11 from Pyrococcus furiosus (strain ATCC 43587 / DSM 3638 / JCM 8422 / Vc1).